The primary structure comprises 333 residues: Transcription initiation factor IIB (333 aa).

The segment at 33–64 (EIYRCPICGNDRFVYNYERGEVVCIVCGAVVQ) adopts a TFIIB-type zinc-finger fold. The Zn(2+) site is built by Cys-37, Cys-40, Cys-56, and Cys-59. Repeat copies occupy residues 149–232 (QELE…LREL) and 243–324 (LYIS…ELAK).

This sequence belongs to the TFIIB family.

Functionally, stabilizes TBP binding to an archaeal box-A promoter. Also responsible for recruiting RNA polymerase II to the pre-initiation complex (DNA-TBP-TFIIB). This is Transcription initiation factor IIB from Pyrobaculum arsenaticum (strain DSM 13514 / JCM 11321 / PZ6).